Consider the following 513-residue polypeptide: ATP synthase subunit alpha (513 aa).

Residue 169–176 (GDRQTGKT) participates in ATP binding.

It belongs to the ATPase alpha/beta chains family. F-type ATPases have 2 components, CF(1) - the catalytic core - and CF(0) - the membrane proton channel. CF(1) has five subunits: alpha(3), beta(3), gamma(1), delta(1), epsilon(1). CF(0) has three main subunits: a(1), b(2) and c(9-12). The alpha and beta chains form an alternating ring which encloses part of the gamma chain. CF(1) is attached to CF(0) by a central stalk formed by the gamma and epsilon chains, while a peripheral stalk is formed by the delta and b chains.

It is found in the cell inner membrane. It carries out the reaction ATP + H2O + 4 H(+)(in) = ADP + phosphate + 5 H(+)(out). Produces ATP from ADP in the presence of a proton gradient across the membrane. The alpha chain is a regulatory subunit. This is ATP synthase subunit alpha from Polynucleobacter necessarius subsp. necessarius (strain STIR1).